The following is a 228-amino-acid chain: Max-interacting protein 1 (228 aa).

Disordered stretches follow at residues 30–76 (YASS…NELE) and 160–228 (SIGS…SFAS). Residues 43 to 56 (QHSKPPRRLSRAQK) show a composition bias toward basic residues. The span at 57-70 (HSSGSSNTSTANRS) shows a compositional bias: polar residues. In terms of domain architecture, bHLH spans 67 to 119 (ANRSTHNELEKNRRAHLRLCLERLKVLIPLGPDCTRHTTLGLLNKAKAHIKKL). Positions 173 to 183 (EREEIEVDVES) are enriched in acidic residues. Polar residues predominate over residues 207-228 (SLQSVGSDEGYSSASVKLSFAS).

In terms of assembly, efficient DNA binding requires dimerization with another bHLH protein. Binds DNA as a heterodimer with MAX. Interacts with SMC3. Interacts with RNF17.

The protein localises to the nucleus. Transcriptional repressor. MXI1 binds with MAX to form a sequence-specific DNA-binding protein complex which recognizes the core sequence 5'-CAC[GA]TG-3'. MXI1 thus antagonizes MYC transcriptional activity by competing for MAX. Isoform Short, which lacks a segment, has a much stronger suppressive potential and associates with a SIN3 homologous protein. This chain is Max-interacting protein 1 (Mxi1), found in Mus musculus (Mouse).